Reading from the N-terminus, the 240-residue chain is UDP-2,3-diacylglucosamine hydrolase (240 aa).

Residues Asp-8, His-10, Asp-41, Asn-79, and His-114 each coordinate Mn(2+). 79–80 (NR) is a binding site for substrate. Positions 122, 160, 164, 167, and 195 each coordinate substrate. Positions 195 and 197 each coordinate Mn(2+).

The protein belongs to the LpxH family. Mn(2+) is required as a cofactor.

The protein localises to the cell inner membrane. It carries out the reaction UDP-2-N,3-O-bis[(3R)-3-hydroxytetradecanoyl]-alpha-D-glucosamine + H2O = 2-N,3-O-bis[(3R)-3-hydroxytetradecanoyl]-alpha-D-glucosaminyl 1-phosphate + UMP + 2 H(+). It functions in the pathway glycolipid biosynthesis; lipid IV(A) biosynthesis; lipid IV(A) from (3R)-3-hydroxytetradecanoyl-[acyl-carrier-protein] and UDP-N-acetyl-alpha-D-glucosamine: step 4/6. In terms of biological role, hydrolyzes the pyrophosphate bond of UDP-2,3-diacylglucosamine to yield 2,3-diacylglucosamine 1-phosphate (lipid X) and UMP by catalyzing the attack of water at the alpha-P atom. Involved in the biosynthesis of lipid A, a phosphorylated glycolipid that anchors the lipopolysaccharide to the outer membrane of the cell. This is UDP-2,3-diacylglucosamine hydrolase from Escherichia coli O6:K15:H31 (strain 536 / UPEC).